A 1374-amino-acid polypeptide reads, in one-letter code: Serine/threonine-protein kinase LMTK1 (1374 aa).

Residues 32–52 (LAVVAVSFSGLFAVIVLMLAC) form a helical membrane-spanning segment. The 271-residue stretch at 125-395 (LLYLKEIGRG…PTAEEVHLLL (271 aa)) folds into the Protein kinase domain. Residues 131–139 (IGRGWFGKV) and K156 each bind ATP. Residue D253 is the Proton acceptor of the active site. At S495 the chain carries Phosphoserine. Disordered regions lie at residues 542 to 622 (GHDP…LAEG), 667 to 731 (VGAR…LLGL), 765 to 1195 (WTET…PAVP), 1245 to 1302 (QESP…AWDD), and 1320 to 1374 (AAPA…SKEA). Residues 606–620 (PSRSPSPSAGPLSLA) show a composition bias toward low complexity. A compositionally biased stretch (polar residues) spans 680–690 (SNVSANNNSGS). 3 stretches are compositionally biased toward low complexity: residues 719-731 (PEPG…LLGL), 801-831 (SPSQ…TPAT), and 847-856 (SSSSPEVEAP). The span at 865–878 (EATSGIFTDTSSDG) shows a compositional bias: polar residues. Positions 900 to 914 (PDSLDSLDIPSSASD) are enriched in low complexity. Over residues 978–987 (RLSTSLSGLN) the composition is skewed to polar residues. S1029 is modified (phosphoserine). Polar residues predominate over residues 1063-1073 (EGSSPEPSTCP). Positions 1138 to 1155 (TPRAPLRLALPGLPAALE) are enriched in low complexity. Residues 1158–1173 (PEEEEEDSEDSDESDE) are compositionally biased toward acidic residues. Phosphoserine is present on residues S1168, S1171, S1184, S1187, and S1262. The span at 1272 to 1291 (GSPSAPNRPQQADGSPNGST) shows a compositional bias: polar residues. A compositionally biased stretch (pro residues) spans 1321–1332 (APAPAAPTPTPA). Residues 1337 to 1352 (FTVSPAPTSRFSITHV) are compositionally biased toward polar residues. Basic and acidic residues predominate over residues 1353–1363 (SDSDAESKRGP). The segment covering 1365 to 1374 (AGAGGESKEA) has biased composition (gly residues).

The protein belongs to the protein kinase superfamily. Tyr protein kinase family. In terms of assembly, interacts with CDK5. Post-translationally, autophosphorylated. Phosphorylated by CDK5. As to expression, expressed in brain.

It is found in the membrane. Its subcellular location is the cytoplasm. It localises to the perinuclear region. The enzyme catalyses L-seryl-[protein] + ATP = O-phospho-L-seryl-[protein] + ADP + H(+). It carries out the reaction L-threonyl-[protein] + ATP = O-phospho-L-threonyl-[protein] + ADP + H(+). In terms of biological role, may be involved in neuronal differentiation. In Homo sapiens (Human), this protein is Serine/threonine-protein kinase LMTK1 (AATK).